A 210-amino-acid chain; its full sequence is MELQLALDLVNIPEAIELVKEVEQYIDVVEIGTPVVINEGLRAVKEIKEAFPQLKVLADLKIMDAGGYEIMKASEAGADIITVLGATDDATIKGAVEEAKKQKKKILVDMINVKDIESRAKEIDALGVDYICVHTGYDLQAEGKNSFEELTTIKNTVKNAKTAIAGGIKLDTLPEVIQQKPDLVIVGGGITSAADKAETASKMKQLIVQG.

This sequence belongs to the HPS/KGPDC family. HPS subfamily.

The catalysed reaction is D-ribulose 5-phosphate + formaldehyde = D-arabino-hex-3-ulose 6-phosphate. It functions in the pathway one-carbon metabolism; formaldehyde assimilation via RuMP pathway; D-fructose 6-phosphate from D-ribulose 5-phosphate and formaldehyde: step 1/2. Its function is as follows. Catalyzes the condensation of ribulose 5-phosphate with formaldehyde to form 3-hexulose 6-phosphate. Together with HxlB, may act as a formaldehyde detoxification system. This chain is 3-hexulose-6-phosphate synthase (hxlA), found in Bacillus subtilis (strain 168).